The sequence spans 792 residues: Type 2 topoisomerase subunit B (792 aa).

Positions 423-537 (CEIFLVEGDS…EGYVYIAEPP (115 aa)) constitute a Toprim domain. Residues E429, D502, and D504 each coordinate Mg(2+).

This sequence belongs to the type II topoisomerase GyrB family. Heterotetramer, composed of two GyrA and two GyrB chains. In the heterotetramer, 'GyrA' contains the active site tyrosine that forms a transient covalent intermediate with DNA, while 'GyrB' binds cofactors and catalyzes ATP hydrolysis. Mg(2+) serves as cofactor. The cofactor is Mn(2+). Requires Ca(2+) as cofactor.

The protein localises to the cytoplasm. It carries out the reaction ATP-dependent breakage, passage and rejoining of double-stranded DNA.. Functionally, a type II topoisomerase. Despite its similarity to DNA gyrase, this enzyme is not able to supercoil DNA, and instead acts like topoisomerase IV. Relaxes both positively and negatively supercoiled DNA in an ATP-dependent fashion, decatenates interlocked circles. If this subunit is reconstituted with GyrA from E.coli the hybrid enzyme supercoils relaxed plasmid DNA; if paired with E.coli ParC supercoiling is not restored. This the first bacteria shown to not contain DNA gyrase, although it has 2 copies of a reverse gyrase that introduces positive supercoils. Type II topoisomerases break and join 2 DNA strands simultaneously in an ATP-dependent manner. The sequence is that of Type 2 topoisomerase subunit B from Aquifex aeolicus (strain VF5).